The following is a 121-amino-acid chain: MTEQKAKSSKTSSEEAKKQKELTEIKIKLKSYDSRLLDQSVKKIFEIVKETGSKFCGPIPLPTKKEVFTIIRSPHVDKASREQFERRTHKRLIIIKNLKNETIQKLKRFVIPSGVELRIYL.

The interval 1 to 20 is disordered; sequence MTEQKAKSSKTSSEEAKKQK.

The protein belongs to the universal ribosomal protein uS10 family. As to quaternary structure, part of the 30S ribosomal subunit.

Its function is as follows. Involved in the binding of tRNA to the ribosomes. The polypeptide is Small ribosomal subunit protein uS10 (Mycoplasmoides gallisepticum (strain R(low / passage 15 / clone 2)) (Mycoplasma gallisepticum)).